The sequence spans 371 residues: F-box protein At2g26850 (371 aa).

Positions 59–105 (KMSILDLPDLPLDCILELLPPSELCTMARVCSSLRERCVSDHLWEKH) constitute an F-box domain.

The polypeptide is F-box protein At2g26850 (Arabidopsis thaliana (Mouse-ear cress)).